The following is a 336-amino-acid chain: Biotin synthase (336 aa).

The region spanning Asn55–Arg282 is the Radical SAM core domain. [4Fe-4S] cluster-binding residues include Cys70, Cys74, and Cys77. Cys114, Cys145, Cys205, and Arg277 together coordinate [2Fe-2S] cluster.

Belongs to the radical SAM superfamily. Biotin synthase family. Homodimer. Requires [4Fe-4S] cluster as cofactor. The cofactor is [2Fe-2S] cluster.

It carries out the reaction (4R,5S)-dethiobiotin + (sulfur carrier)-SH + 2 reduced [2Fe-2S]-[ferredoxin] + 2 S-adenosyl-L-methionine = (sulfur carrier)-H + biotin + 2 5'-deoxyadenosine + 2 L-methionine + 2 oxidized [2Fe-2S]-[ferredoxin]. It participates in cofactor biosynthesis; biotin biosynthesis; biotin from 7,8-diaminononanoate: step 2/2. Its function is as follows. Catalyzes the conversion of dethiobiotin (DTB) to biotin by the insertion of a sulfur atom into dethiobiotin via a radical-based mechanism. The chain is Biotin synthase from Brucella anthropi (strain ATCC 49188 / DSM 6882 / CCUG 24695 / JCM 21032 / LMG 3331 / NBRC 15819 / NCTC 12168 / Alc 37) (Ochrobactrum anthropi).